Reading from the N-terminus, the 122-residue chain is Phospholipase A2 crotoxin basic chain (122 aa).

7 disulfides stabilise this stretch: Cys-26–Cys-115, Cys-28–Cys-44, Cys-43–Cys-95, Cys-49–Cys-122, Cys-50–Cys-88, Cys-57–Cys-81, and Cys-75–Cys-86. Residues Tyr-27, Gly-29, and Gly-31 each contribute to the Ca(2+) site. The active site involves His-47. Asp-48 lines the Ca(2+) pocket. Asp-89 is a catalytic residue.

In terms of assembly, heterodimer of one acidic (CA also named crotapotin) and one basic (CB) subunits; non-covalently linked. Requires Ca(2+) as cofactor. Expressed by the venom gland.

The protein localises to the secreted. The catalysed reaction is a 1,2-diacyl-sn-glycero-3-phosphocholine + H2O = a 1-acyl-sn-glycero-3-phosphocholine + a fatty acid + H(+). Its function is as follows. Heterodimer CA-CB: Crotoxin is a potent presynaptic neurotoxin that possesses phospholipase A2 (PLA2) activity and exerts a lethal action by blocking neuromuscular transmission. It consists of a non-covalent association of a basic and weakly toxic PLA2 subunit (CB), with a small acidic, non-enzymatic and non-toxic subunit (CA also named crotapotin). The complex acts by binding to a specific 48-kDa protein (R48) receptor located on presynaptic membranes, forming a transient ternary complex CA-CB-R48, followed by dissociation of the CA-CB complex and release of the CA subunit. At equilibrium, only the CB subunits remain associated with the specific crotoxin receptor. In addition to neurotoxicity, crotoxin has been found to exert nephrotoxicity, and cardiovascular toxicity. Moreover, anti-inflammatory, immunomodulatory, anti-tumor and analgesic effects of crotoxin have also been reported. Functionally, monomer CB: The basic subunit of crotoxin is a snake venom phospholipase A2 (PLA2) that exhibits weak neurotoxicity and strong anticoagulant effects by binding to factor Xa (F10) and inhibiting the prothrombinase activity. In addition, it exerts myotoxicity, nephrotoxicity, and cardiovascular toxicity as well as anti-inflammatory, immunomodulatory, anti-tumor and analgesic effects. Also shows a strong antimicrobial activity against X.axonopodis passiforae (Gram-negative) which is completely dependent on the enzymatic activity. PLA2 catalyzes the calcium-dependent hydrolysis of the 2- acyl groups in 3-sn-phosphoglycerides. The protein is Phospholipase A2 crotoxin basic chain of Crotalus durissus collilineatus (Brazilian rattlesnake).